A 361-amino-acid polypeptide reads, in one-letter code: Peptide chain release factor 1 (361 aa).

Glutamine 237 carries the N5-methylglutamine modification. Residues 287-297 (KQQKEQSDTRK) are compositionally biased toward basic and acidic residues. The disordered stretch occupies residues 287 to 307 (KQQKEQSDTRKNLVGSGDRSE).

The protein belongs to the prokaryotic/mitochondrial release factor family. Post-translationally, methylated by PrmC. Methylation increases the termination efficiency of RF1.

Its subcellular location is the cytoplasm. Its function is as follows. Peptide chain release factor 1 directs the termination of translation in response to the peptide chain termination codons UAG and UAA. The sequence is that of Peptide chain release factor 1 from Francisella philomiragia subsp. philomiragia (strain ATCC 25017 / CCUG 19701 / FSC 153 / O#319-036).